Reading from the N-terminus, the 592-residue chain is A-type ATP synthase subunit A (592 aa).

236 to 243 (GPFGSGKT) provides a ligand contact to ATP.

The protein belongs to the ATPase alpha/beta chains family. In terms of assembly, has multiple subunits with at least A(3), B(3), C, D, E, F, H, I and proteolipid K(x).

The protein localises to the cell membrane. The enzyme catalyses ATP + H2O + 4 H(+)(in) = ADP + phosphate + 5 H(+)(out). Functionally, component of the A-type ATP synthase that produces ATP from ADP in the presence of a proton gradient across the membrane. The A chain is the catalytic subunit. In Methanopyrus kandleri (strain AV19 / DSM 6324 / JCM 9639 / NBRC 100938), this protein is A-type ATP synthase subunit A.